Consider the following 191-residue polypeptide: Ferric nitrobindin-like protein (191 aa).

A GXWXGXG motif is present at residues 20 to 26; it reads GNWAGAG.

It belongs to the nitrobindin family.

This Streptomyces avermitilis (strain ATCC 31267 / DSM 46492 / JCM 5070 / NBRC 14893 / NCIMB 12804 / NRRL 8165 / MA-4680) protein is Ferric nitrobindin-like protein.